A 548-amino-acid polypeptide reads, in one-letter code: Telomerase Cajal body protein 1 (548 aa).

The segment at 1-142 (MKTLETQPLA…SGEPAAEDEG (142 aa)) is disordered. A compositionally biased stretch (low complexity) spans 15–31 (PSDQDPAPAHPSPHASP). S26, S30, and S54 each carry phosphoserine. S64 is subject to Phosphoserine; by ATM. Phosphoserine is present on residues S85, S90, S112, and S114. WD repeat units lie at residues 167-206 (QPEN…YHEG), 222-267 (EGDT…LRAS), 272-313 (NHLD…RDCE), 323-364 (GQSG…ALLG), 365-405 (GHQG…YPLW), and 411-450 (VTTN…NDGK). T489 is subject to Phosphothreonine. S491 bears the Phosphoserine mark. The interval 526-548 (SIPDDHQGEKGQGGTEGGVGELI) is disordered. Over residues 535–548 (KGQGGTEGGVGELI) the composition is skewed to gly residues.

Belongs to the TCAB1 family. In terms of assembly, component of the telomerase holoenzyme complex composed of one molecule of TERT, one molecule of WRAP53/TCAB1, two molecules of H/ACA ribonucleoprotein complex subunits DKC1, NOP10, NHP2 and GAR1, and a telomerase RNA template component (TERC). The telomerase holoenzyme complex is associated with TEP1, SMG6/EST1A and POT1. Interacts with the chaperonin-containing T-complex (TRiC) complex; which mediates the folding of WRAP53/TCAB1. Interacts with COIL. Interacts with SMN1. Interacts with RNF8. Interacts with histone H2AX. Post-translationally, phosphorylated at Ser-64 by ATM in response to DNA damage, promoting its interaction with histone H2AX and localization to sites of DNA double-strand breaks. As to expression, expressed in all tissues and cell lines examined.

It localises to the nucleus. The protein resides in the cajal body. The protein localises to the chromosome. Its subcellular location is the telomere. RNA chaperone that plays a key role in telomere maintenance and RNA localization to Cajal bodies. Specifically recognizes and binds the Cajal body box (CAB box) present in both small Cajal body RNAs (scaRNAs) and telomerase RNA template component (TERC). Essential component of the telomerase holoenzyme complex, a ribonucleoprotein complex essential for the replication of chromosome termini that elongates telomeres in most eukaryotes. In the telomerase holoenzyme complex, required to stimulate the catalytic activity of the complex. Acts by specifically binding the CAB box of the TERC RNA and controlling the folding of the CR4/CR5 region of the TERC RNA, a critical step for telomerase activity. In addition, also controls telomerase holoenzyme complex localization to Cajal body. During S phase, required for delivery of TERC to telomeres during S phase and for telomerase activity. In addition to its role in telomere maintenance, also required for Cajal body formation, probably by mediating localization of scaRNAs to Cajal bodies. Also plays a role in DNA repair: phosphorylated by ATM in response to DNA damage and relocalizes to sites of DNA double-strand breaks to promote the repair of DNA double-strand breaks. Acts by recruiting the ubiquitin ligase RNF8 to DNA breaks and promote both homologous recombination (HR) and non-homologous end joining (NHEJ). This Homo sapiens (Human) protein is Telomerase Cajal body protein 1.